Here is a 295-residue protein sequence, read N- to C-terminus: MSKDIATPGRTTEILKKYGFLFKKSLGQNFLIDSNILTRITDTAEITKETNVIEIGPGIGALTEQLAKTANEVVAFEIDQRLLPILDDTLSAYNNVKVVHGDVLKADVEEVIAEQFAKPELPLKIVANLPYYVTTPIILKLLHDNIPADSMTFMLQKEVADRISAVPSTKSYGSLTIAIQFYMEAELAFIVPKTVFMPQPNVDSAVIHLKRRKEPLAEVNDEEFFFEVTRASFAQRRKTLWNNLASKFPALKPRKDELVEGLNAIGIDLIRRGETLDIPEFAKLSNFLGDFLKEK.

6 residues coordinate S-adenosyl-L-methionine: Asn-29, Leu-31, Gly-56, Glu-77, Asp-102, and Asn-128.

It belongs to the class I-like SAM-binding methyltransferase superfamily. rRNA adenine N(6)-methyltransferase family. RsmA subfamily.

The protein resides in the cytoplasm. The catalysed reaction is adenosine(1518)/adenosine(1519) in 16S rRNA + 4 S-adenosyl-L-methionine = N(6)-dimethyladenosine(1518)/N(6)-dimethyladenosine(1519) in 16S rRNA + 4 S-adenosyl-L-homocysteine + 4 H(+). In terms of biological role, specifically dimethylates two adjacent adenosines (A1518 and A1519) in the loop of a conserved hairpin near the 3'-end of 16S rRNA in the 30S particle. May play a critical role in biogenesis of 30S subunits. The chain is Ribosomal RNA small subunit methyltransferase A from Listeria monocytogenes serovar 1/2a (strain ATCC BAA-679 / EGD-e).